We begin with the raw amino-acid sequence, 234 residues long: Phosphoribosylaminoimidazole-succinocarboxamide synthase (234 aa).

It belongs to the SAICAR synthetase family.

The enzyme catalyses 5-amino-1-(5-phospho-D-ribosyl)imidazole-4-carboxylate + L-aspartate + ATP = (2S)-2-[5-amino-1-(5-phospho-beta-D-ribosyl)imidazole-4-carboxamido]succinate + ADP + phosphate + 2 H(+). Its pathway is purine metabolism; IMP biosynthesis via de novo pathway; 5-amino-1-(5-phospho-D-ribosyl)imidazole-4-carboxamide from 5-amino-1-(5-phospho-D-ribosyl)imidazole-4-carboxylate: step 1/2. In Streptococcus agalactiae serotype III (strain NEM316), this protein is Phosphoribosylaminoimidazole-succinocarboxamide synthase.